Reading from the N-terminus, the 918-residue chain is DNA repair and recombination protein RAD54B (918 aa).

Positions 1–11 (MRRSAAPSQVL) are enriched in polar residues. Positions 1–29 (MRRSAAPSQVLGNVAKKPRFIPPGKSNAL) are disordered. The Helicase ATP-binding domain maps to 320–487 (GMRVSGRFGA…YALIEFVNPG (168 aa)). 333 to 340 (DEMGLGKT) serves as a coordination point for ATP. A DEGH box motif is present at residues 438–441 (DEGH). The Helicase C-terminal domain maps to 653–817 (VLVKLLAAIR…HIHFSVEELR (165 aa)). The tract at residues 842-873 (KDHQNPSSKKPSVSRCCQLRQDQGKHNSKKPL) is disordered.

The protein belongs to the SNF2/RAD54 helicase family.

It localises to the nucleus. Its function is as follows. Involved in DNA repair and mitotic recombination. The protein is DNA repair and recombination protein RAD54B (RAD54B) of Gallus gallus (Chicken).